The chain runs to 151 residues: Transcriptional regulator MraZ (151 aa).

2 SpoVT-AbrB domains span residues 5-51 (AHEL…PVAE) and 81-124 (AEIL…GREQ).

It belongs to the MraZ family. In terms of assembly, forms oligomers.

The protein resides in the cytoplasm. It is found in the nucleoid. The sequence is that of Transcriptional regulator MraZ from Neisseria gonorrhoeae (strain ATCC 700825 / FA 1090).